The primary structure comprises 227 residues: Protein LppM (227 aa).

An N-terminal signal peptide occupies residues 1–24 (MARTRRRGMLAIAMLLMLVPLATG). The N-palmitoyl cysteine moiety is linked to residue Cys25. Cys25 carries the S-diacylglycerol cysteine lipid modification. The segment at 26 to 185 (LRVRASITIS…ARYTDPNTRS (160 aa)) is important for bacterial uptake by host macrophages. Residues 190–210 (GIWLGIAAFAAAGVVAVLAWI) form a helical membrane-spanning segment.

Post-translationally, a shorter form (about 20 kDa) is secreted; upon overexpression of the whole protein in M.smegmatis the C-terminus of the short form is about residue 187, suggesting it is generated by cleavage of the protein before its C-terminal transmembrane domain.

It is found in the membrane. Its subcellular location is the secreted. It localises to the cell wall. Its function is as follows. A putative lipoprotein that seems to be specialized for the initial steps of macrophage infection. A non-acylated fragment (residues 26-185) binds phosphatidyl-myo-inositol mannosides (PIMs). Limits, in a TLR2-dependent fashion, bacterial uptake by host (mouse); this effect may be mediated by nonacylated fragment 26-185. Plays a TLR2-dependent role in host phagosome maturation arrest. Plays a TLR2-independent role in chemokine production during the first 24 hours of mouse infection. The protein is Protein LppM (lppM) of Mycobacterium tuberculosis (strain ATCC 25618 / H37Rv).